A 346-amino-acid chain; its full sequence is D-alanine--D-alanine ligase (346 aa).

An ATP-grasp domain is found at 133 to 327 (KLYAKSVGVK…ALADQISLEK (195 aa)). 159-211 (LSFPCIIKPARLGSSIGISIVKDEKDLEYAKDVGFEFDNDLVVEEFKNNIKEY) is a binding site for ATP. 3 residues coordinate Mg(2+): Asp-284, Glu-296, and Asn-298.

This sequence belongs to the D-alanine--D-alanine ligase family. Mg(2+) serves as cofactor. Requires Mn(2+) as cofactor.

The protein resides in the cytoplasm. The catalysed reaction is 2 D-alanine + ATP = D-alanyl-D-alanine + ADP + phosphate + H(+). Its pathway is cell wall biogenesis; peptidoglycan biosynthesis. Its function is as follows. Cell wall formation. The chain is D-alanine--D-alanine ligase from Campylobacter jejuni subsp. jejuni serotype O:6 (strain 81116 / NCTC 11828).